A 1124-amino-acid chain; its full sequence is SH3 and PX domain-containing protein 2A (1124 aa).

The region spanning 4 to 128 is the PX domain; it reads YCVQDATVVD…RFFEARPEDV (125 aa). The 60-residue stretch at 166-225 folds into the SH3 1 domain; sequence MILEQYVVVSNYKKQENSELSLQAGEVVDVIEKNESGWWFVSTSEEQGWVPATYLEAQNG. Position 256 is a phosphothreonine (threonine 256). One can recognise an SH3 2 domain in the interval 266–325; sequence SREEKYVTVQPYTSQSKDEIGFEKGVTVEVIRKNLEGWWYIRYLGKEGWAPASYLKKAKD. Residues serine 405 and serine 420 each carry the phosphoserine modification. Disordered stretches follow at residues 414–443, 504–672, 692–830, and 886–952; these read QRAQ…PKPP, RKKP…KLKA, SVTI…PKKE, and YLVA…GKTS. The 60-residue stretch at 447 to 506 folds into the SH3 3 domain; that stretch reads SVEVEYYTIAEFQSCISDGISFRGGQKAEVIDKNSGGWWYVQIGEKEGWAPASYIDKRKK. Serine 546 and serine 566 each carry phosphoserine. Residues 575–585 are compositionally biased toward basic and acidic residues; the sequence is SGDRGSGDKHP. Residue serine 592 is modified to Phosphoserine. Residues 607-619 show a composition bias toward acidic residues; the sequence is SSEDVALEEETIY. Composition is skewed to low complexity over residues 633-669 and 692-709; these read SARG…SLLK and SVTI…SSLS. Phosphoserine is present on serine 643. The span at 713–739 shows a compositional bias: basic and acidic residues; sequence GDLKPRSASDAGIRDTPKVGTKKDPDV. At threonine 728 the chain carries Phosphothreonine. Serine 764, serine 766, and serine 812 each carry phosphoserine. The residue at position 822 (threonine 822) is a Phosphothreonine. Residues 833-892 form the SH3 4 domain; the sequence is GQGATYVTCSAYQKVQDSEISFPEGAEVHVLEKAESGWWYVRFGELEGWAPSHYLVAEEN. Residues 907–937 are a coiled coil; the sequence is SSQNEGKSDSLEKIEKRVQALNTVNQSKRAT. A compositionally biased stretch (basic and acidic residues) spans 912–924; it reads GKSDSLEKIEKRV. A compositionally biased stretch (polar residues) spans 926–935; it reads ALNTVNQSKR. 4 positions are modified to phosphoserine: serine 993, serine 1007, serine 1008, and serine 1029. The interval 1020-1050 is disordered; the sequence is KGRLAERAASQGSESPLLPTQRKGIPVSPVR. Residues 1063 to 1124 enclose the SH3 5 domain; it reads NLKDVYISIA…VPSNYLEKKN (62 aa).

This sequence belongs to the SH3PXD2 family. Interacts with ADAM12, ADAM15 and ADAM19. Interacts with NOXO1. Interacts (via SH3 domains) with NOXA1; the interaction is direct. Interacts (via N-terminus) with CYBA. Interacts with FASLG. Interacts (via PX domain) with RAB40B (GTP-bound); interaction promotes invadopodia-mediated extracellular matrix degradation. Tyrosine phosphorylated by SRC. Phosphorylation plays a regulatory role in the protein localization. The intramolecular interaction of the PX domain with the third SH3 domain maintains the protein in the cytoplasm and phosphorylation disrupts this interaction, resulting in the redistribution of the protein from cytoplasm to the perimembrane region. Phosphorylated on serine upon DNA damage, probably by ATM or ATR. As to expression, widely expressed. Not found in the spleen and testis.

Its subcellular location is the cytoplasm. The protein localises to the cell projection. The protein resides in the podosome. Its function is as follows. Adapter protein involved in invadopodia and podosome formation, extracellular matrix degradation and invasiveness of some cancer cells. Binds matrix metalloproteinases (ADAMs), NADPH oxidases (NOXs) and phosphoinositides. Acts as an organizer protein that allows NOX1- or NOX3-dependent reactive oxygen species (ROS) generation and ROS localization. In association with ADAM12, mediates the neurotoxic effect of amyloid-beta peptide. In Mus musculus (Mouse), this protein is SH3 and PX domain-containing protein 2A.